We begin with the raw amino-acid sequence, 926 residues long: Ubiquitin carboxyl-terminal hydrolase 4 (926 aa).

The region spanning 205–328 (SQMEILLIDI…WLKSNYGRQV (124 aa)) is the Rhodanese domain. Residue S443 is modified to Phosphoserine. The 362-residue stretch at 562 to 923 (VGLENLGNSC…NAYVLFYHRV (362 aa)) folds into the USP domain. C571 functions as the Nucleophile in the catalytic mechanism. Catalysis depends on H880, which acts as the Proton acceptor.

It belongs to the peptidase C19 family. In terms of assembly, interacts with BRO1, RFU1 and VPS32. Associates with the 26S proteasome.

It localises to the cytoplasm. Its subcellular location is the late endosome membrane. The catalysed reaction is Thiol-dependent hydrolysis of ester, thioester, amide, peptide and isopeptide bonds formed by the C-terminal Gly of ubiquitin (a 76-residue protein attached to proteins as an intracellular targeting signal).. Its activity is regulated as follows. RFU1 is an inhibitor of deubiquitination activity. Ubiquitin thioesterase that acts at the late endosome/prevacuolar compartment to recover ubiquitin from ubiquitinated membrane proteins en route to the vacuole. Also removes ubiquitin from soluble proteins targeted to proteasomes. Is essential to maintain a normal level of free ubiquitin. Involved in the ammonium-induced down-regulation of the GAP1 permease and the UME3 destruction in response to oxidative stress. Has a role in the RAD9 checkpoint response to TOP1 poisons. Required for promoting coordination of DNA replication and avoids DNA overreplication. This is Ubiquitin carboxyl-terminal hydrolase 4 (DOA4) from Saccharomyces cerevisiae (strain ATCC 204508 / S288c) (Baker's yeast).